Consider the following 324-residue polypeptide: Aldo-keto reductase family 1 member C15 (324 aa).

NADP(+)-binding positions include 24 to 26 (TFA) and Asp51. The active-site Proton donor is the Tyr56. Substrate is bound at residue His118. NADP(+) contacts are provided by residues 167–168 (SN), Gln191, 217–225 (YSALGSHRD), and 269–281 (LAKSFNEKRIKEN).

It belongs to the aldo/keto reductase family. Monomer. In terms of tissue distribution, expressed in lung, specifically in bronchiolar club cells, type II alveolar cells and epithelial cells of the duct of the bronchial gland (at protein level). Expressed in gastric parietal cells and in epithelial cells of the large intestine and colon (at protein level). Expressed in brown adipocytes (at protein level). Expressed in vascular endothelial cells (at protein level).

The protein localises to the cytoplasm. It carries out the reaction (2E,6E)-farnesol + NADP(+) = (2E,6E)-farnesal + NADPH + H(+). The dehydrogenase activity is inhibited by 3',3'',5',5''-tetraiodophenolphthalein, phenolphthalein, genistein, quercetin, zearalenone and diethylstilbestrol. Catalyzes the NADPH-dependent reduction of a variety of substrates including aromatic and aliphatic aldehydes, quinones, ketones, dicarbonyl compounds and 17-ketosteroids. Catalyzes the NADP(+)-dependent oxidation of aromatic, alicyclic and aliphatic alcohols, and 17beta-hydroxysteroids. To a lesser extent, can also catalyze the reduction of some aldoses and ketoses and the oxidation of some sugar alcohols. In the stomach, lung and colon tissues, mediates the reduction of farnesal and geranylgeranial into farnesol and geranylgeraniol respectively. By reducing 4-hydroxy-2-nonenal (HNE), produced during lipid peroxidation, into 1,4-dihydro-2-nonene (DHN), protects vascular endothelial cells from damage elicited by oxidized lipoproteins. This is Aldo-keto reductase family 1 member C15 from Rattus norvegicus (Rat).